A 499-amino-acid polypeptide reads, in one-letter code: Probable malate:quinone oxidoreductase (499 aa).

It belongs to the MQO family. Requires FAD as cofactor.

It catalyses the reaction (S)-malate + a quinone = a quinol + oxaloacetate. It functions in the pathway carbohydrate metabolism; tricarboxylic acid cycle; oxaloacetate from (S)-malate (quinone route): step 1/1. This chain is Probable malate:quinone oxidoreductase, found in Exiguobacterium sp. (strain ATCC BAA-1283 / AT1b).